Reading from the N-terminus, the 110-residue chain is Circadian clock oscillator protein KaiB (110 aa).

Belongs to the KaiB family. The KaiABC complex composition changes during the circadian cycle to control KaiC phosphorylation. Complexes KaiC(6), KaiA(2-4):KaiC(6), KaiB(6):KaiC(6) and KaiC(6):KaiB(6):KaiA(12) are among the most important forms, many form cooperatively. Undergoes a major conformational rearrangment; in the free state forms homotetramers as a dimer of dimers. When bound to the CI domain of KaiC switches to a monomeric thioredoxin-fold (KaiB(fs)). KaiB(fs) binds CikA, leading it to dephosphorylate phospho-RpaA.

Functionally, key component of the KaiABC oscillator complex, which constitutes the main circadian regulator in cyanobacteria. Complex composition changes during the circadian cycle to control KaiC phosphorylation. KaiA stimulates KaiC autophosphorylation, while KaiB sequesters KaiA, leading to KaiC autodephosphorylation. Phospho-Ser-431 KaiC accumulation triggers binding of KaiB to form the KaiB(6):KaiC(6) complex, leading to changes in output regulators CikA and SasA. KaiB switches to a thioredoxin-like fold (KaiB(fs)) when bound to KaiC. KaiB(6):KaiC(6) formation exposes a site for KaiA binding that sequesters KaiA from KaiC, making the KaiC(6):KaiB(6):KaiA(12) complex that results in KaiC autodephosphorylation. In terms of biological role, a metamorphic protein which reversibly switches between an inactive tetrameric fold and a rare, thioredoxin-like monomeric fold (KaiB(fs)). KaiB(fs) binds phospho-KaiC, KaiA and CikA. KaiA and CikA compete for binding to KaiB(fs), and KaiB(fs) and SasA compete for binding to KaiC, thus the clock oscillator and output signal pathway are tightly coupled. The polypeptide is Circadian clock oscillator protein KaiB (Synechococcus sp. (strain RCC307)).